The primary structure comprises 543 residues: Protein GPR108 (543 aa).

The signal sequence occupies residues 1–32 (MAVSERRGLGRGSPAEWGQRLLLVLLLGGCSG). Asn57 and Asn109 each carry an N-linked (GlcNAc...) asparagine glycan. The tract at residues 149–186 (SKPGLPKPQATVPRKVDGGGTSAASKPKSTPAVIQGPS) is disordered. Asn200, Asn204, and Asn228 each carry an N-linked (GlcNAc...) asparagine glycan. Transmembrane regions (helical) follow at residues 263-283 (LYMVMSACFLAAGIFWVSILC), 292-312 (IHWLMAALAFTKSISLLFHSI), 336-356 (LLKGALLFITIALIGSGWAFI), 367-387 (VFGIVIPMQVLANVAYIIIES), 401-421 (ILFLVDLICCGAILFPVVWSI), 449-469 (VMVICYVYFTRIIAILLQVAV), and 473-493 (WQWLYQLLVEGSTLAFFVLTG). N-linked (GlcNAc...) asparagine glycosylation occurs at Asn534.

This sequence belongs to the LU7TM family.

The protein localises to the golgi apparatus. The protein resides in the cis-Golgi network membrane. It is found in the trans-Golgi network membrane. Its subcellular location is the golgi apparatus membrane. In terms of biological role, may play a role in intracellular immune modulation by activating NF-kappaB response and attenuating Toll-like-receptor response. (Microbial infection) Plays an essential function in adeno-associated virus (AAV) transduction across multiple serotypes except AAV5. May play a critical role in mediating the endosomal virus escape or in the AAV virions trafficking from endosomes to the nucleus. The chain is Protein GPR108 from Homo sapiens (Human).